The sequence spans 138 residues: MTKPIAKISLRKNARIGSNKNERRIPKGVIHVQASFNNTIVTVTDVRGRVVSWASAGTSGFRGTRKGTPYAAQAAAFNAIRTLVDQGMQRAEVMIKGPGLGRDAALRAIRRNGILLSFVRDVTPMPHNGCRPPKKRRV.

It belongs to the universal ribosomal protein uS11 family. Part of the 30S ribosomal subunit.

It localises to the plastid. The protein localises to the chloroplast. The sequence is that of Small ribosomal subunit protein uS11c from Phalaenopsis aphrodite subsp. formosana (Moth orchid).